The chain runs to 467 residues: Ankyrin repeat and SOCS box protein 10 (467 aa).

ANK repeat units lie at residues 115-144 (ELTT…KPDS), 147-176 (GGRT…DPNT), 180-209 (DGKR…QVDG), 214-243 (EEET…CPDV), 247-289 (EGWT…DADA), 293-322 (DKQR…NANA), and 326-361 (GGHT…AVRV). Residues 412 to 467 (YSSLFALVRQPRSLQHLCRCALRSHLEGCLPHALPRLPLPPRMLRFLQLDFEDLLY) form the SOCS box domain.

Belongs to the ankyrin SOCS box (ASB) family.

It is found in the nucleus. The protein resides in the cytoplasm. Its pathway is protein modification; protein ubiquitination. May be a substrate-recognition component of a SCF-like ECS (Elongin-Cullin-SOCS-box protein) E3 ubiquitin-protein ligase complex which mediates the ubiquitination and subsequent proteasomal degradation of target proteins. This Mus musculus (Mouse) protein is Ankyrin repeat and SOCS box protein 10 (Asb10).